The sequence spans 396 residues: Elongation factor Tu (396 aa).

The tr-type G domain occupies K10–E206. A G1 region spans residues G19 to T26. Residue G19–T26 participates in GTP binding. T26 lines the Mg(2+) pocket. The tract at residues G60–S64 is G2. Residues D81 to G84 form a G3 region. GTP-binding positions include D81–H85 and N136–D139. Residues N136–D139 form a G4 region. Positions S174–L176 are G5.

Belongs to the TRAFAC class translation factor GTPase superfamily. Classic translation factor GTPase family. EF-Tu/EF-1A subfamily. In terms of assembly, monomer.

It localises to the cytoplasm. The catalysed reaction is GTP + H2O = GDP + phosphate + H(+). Its function is as follows. GTP hydrolase that promotes the GTP-dependent binding of aminoacyl-tRNA to the A-site of ribosomes during protein biosynthesis. This chain is Elongation factor Tu, found in Parvibaculum lavamentivorans (strain DS-1 / DSM 13023 / NCIMB 13966).